We begin with the raw amino-acid sequence, 480 residues long: Gasdermin-C2 (480 aa).

The tract at residues Met1–Lys226 is triggers pyroptosis.

Belongs to the gasdermin family. Homooligomer; homooligomeric ring-shaped pore complex containing 27-28 subunits when inserted in the membrane. Cleavage by CASP8 relieves autoinhibition by releasing the N-terminal moiety (Gasdermin-C2, N-terminal) that initiates pyroptosis. Post-translationally, palmitoylated.

Its subcellular location is the cytoplasm. The protein localises to the cytosol. The protein resides in the cell membrane. The full-length protein before cleavage is inactive: intramolecular interactions between N- and C-terminal domains mediate autoinhibition in the absence of activation signal. The intrinsic pyroptosis-inducing activity is carried by the released N-terminal moiety (Gasdermin-C2, N-terminal) following cleavage by caspase CASP8 in response to type-2 immunity following worm infection. This form constitutes the precursor of the pore-forming protein: upon cleavage, the released N-terminal moiety (Gasdermin-C2, N-terminal) binds to membranes and forms pores, triggering pyroptosis. In terms of biological role, pore-forming protein that causes membrane permeabilization and pyroptosis in response to type-2 immunity. Produced by the cleavage of gasdermin-C2 in response to type-2 immunity following worm infection. After cleavage, moves to the plasma membrane where it strongly binds to membrane inner leaflet lipids. Homooligomerizes within the membrane and forms pores of 10-15 nanometers (nm) of inner diameter, triggering pyroptosis and lytic cell death in enterocytes. The sequence is that of Gasdermin-C2 from Mus musculus (Mouse).